The sequence spans 376 residues: Putative transcription factor egl-18 (376 aa).

Disordered regions lie at residues 1 to 33 (MSIS…CSGC), 65 to 122 (NNEL…LPDF), 148 to 197 (MVQQ…SDIP), and 240 to 264 (ATPS…PNAA). Basic and acidic residues predominate over residues 9 to 27 (TRPESAEQQHHEVLQRPSD). 2 stretches are compositionally biased toward low complexity: residues 68 to 89 (LKSS…RSSP) and 165 to 175 (QQSVSPPQSKS). The segment covering 176-195 (VKIEDPMDQDVKQEESERSD) has biased composition (basic and acidic residues). Over residues 241 to 250 (TPSSQSQDSS) the composition is skewed to polar residues. Residues 266 to 290 (CSNCRTDKTTAWRRDAEGKLVCNPC) form a GATA-type zinc finger.

In terms of tissue distribution, expressed in differentiated seam cells. Expressed in the head and trunk.

Its subcellular location is the nucleus. In terms of biological role, probable transcription factor. Involved in embryonic development and in vulval development in larvae, acting redundantly, at least in part, with elt-6. Perhaps acting together with elt-6, may form a positive feedback loop to initiate and maintain lin-39 gene expression to ensure proper vulval precursor cell (VPC) fate specification. Together with elt-6, acts as a downstream target of the Wnt/beta-catenin asymmetry pathway, required to adopt or maintain the seam cell fate. Required in seam cells, acting redundantly with elt-6, to promote production of alae, expression of several seam-specific genes and maintenance of seam cells in an unfused state. Plays a role in longevity. May form a transcriptional circuit with GATA factors elt-3 and elt-6. This Caenorhabditis elegans protein is Putative transcription factor egl-18.